We begin with the raw amino-acid sequence, 436 residues long: Histone acetyltransferase type B subunit 2 (436 aa).

Positions 1 to 19 are enriched in acidic residues; sequence MEPYDDGFIEEQEEQEEER. The segment at 1–22 is disordered; that stretch reads MEPYDDGFIEEQEEQEEERTEE. WD repeat units lie at residues 136–176, 187–227, 237–277, 284–324, and 328–368; these read DHKG…SLPT, GHTK…KGNK, HHSS…TTRA, QHRD…TKLH, and CHTD…EEQT. Residues 370-374 form an interaction with the histone H4 N-terminus region; that stretch reads DDAQD. The stretch at 385 to 425 is one WD 6 repeat; sequence GHTNRISDFSWNLNDPWVLCSAAEDNLLQVWKVADAIVGKD.

It belongs to the WD repeat RBAP46/RBAP48/MSI1 family. Component of the HAT-B complex composed of at least hat1 and hat2. The HAT-B complex binds to histone H4 tail.

The protein localises to the cytoplasm. It localises to the nucleus. Regulatory subunit of the histone acetylase B (HAT-B) complex. The complex acetylates 'Lys-12' of histone H4 which is required for telomeric silencing. The polypeptide is Histone acetyltransferase type B subunit 2 (hat2) (Aspergillus oryzae (strain ATCC 42149 / RIB 40) (Yellow koji mold)).